A 203-amino-acid chain; its full sequence is GTP cyclohydrolase-2 (203 aa).

Residue R49–E53 coordinates GTP. C54, C65, and C67 together coordinate Zn(2+). GTP contacts are provided by residues Q70, E92–R94, and T114. The Proton acceptor role is filled by D126. The Nucleophile role is filled by R128. Residues T149 and K154 each coordinate GTP.

Belongs to the GTP cyclohydrolase II family. The cofactor is Zn(2+).

The enzyme catalyses GTP + 4 H2O = 2,5-diamino-6-hydroxy-4-(5-phosphoribosylamino)-pyrimidine + formate + 2 phosphate + 3 H(+). Its pathway is cofactor biosynthesis; riboflavin biosynthesis; 5-amino-6-(D-ribitylamino)uracil from GTP: step 1/4. In terms of biological role, catalyzes the conversion of GTP to 2,5-diamino-6-ribosylamino-4(3H)-pyrimidinone 5'-phosphate (DARP), formate and pyrophosphate. The chain is GTP cyclohydrolase-2 from Shewanella sp. (strain MR-4).